Here is a 233-residue protein sequence, read N- to C-terminus: B-cell lymphoma/leukemia 10 (233 aa).

Position 1 is an N-acetylmethionine (Met-1). A CARD domain is found at 13–101 (LTEVKKDALE…QSFLIQKITD (89 aa)). Residues Lys-17, Lys-31, and Lys-63 each participate in a glycyl lysine isopeptide (Lys-Gly) (interchain with G-Cter in ubiquitin) cross-link. Ser-138 bears the Phosphoserine mark. Residues 185–233 (SSFSSATLPRPGDPGAPPLPPDLRLEEGGSCGNSSEMFLPLRSRALSRQ) are disordered. A compositionally biased stretch (pro residues) spans 195–205 (PGDPGAPPLPP).

Homomultimer; homooligomerized following recruitment by CARD domain-containing proteins that form a nucleating helical template that recruits BCL10 via CARD-CARD interaction. Self-associates by CARD-CARD interaction and interacts with other CARD-proteins such as CARD9, CARD10, CARD11 and CARD14. Forms a complex with CARD14 and MALT1; resulting in the formation of a CBM (CARD14-BCL10-MALT1) complex. Forms a complex with CARD11 and MALT1; resulting in the formation of a CBM (CARD11-BCL10-MALT1) complex. Forms a complex with CARD9 and MALT1; resulting in the formation of a CBM (CARD9-BCL10-MALT1) complex. Found in a membrane raft complex, at least composed of BCL10, CARD11, DPP4 and IKBKB. Binds caspase-9 with its C-terminal domain. Interacts with TRAF2 and BIRC2/c-IAP2. Interacts with PELI2 and SOCS3; these interactions may be mutually exclusive. Post-translationally, phosphorylated by IKBKB/IKKB. Ubiquitinated via both 'Lys-63'-linked and linear ('Met-1'-linked) polyubiquitin chains in response to T-cell receptor (TCR) activation. Ubiquitination is recognized by IKBKG/NEMO, the regulatory subunit of I-kappa-B kinase (IKK), and is required for TCR-induced NF-kappa-B activation. Linear ubiquitination at Lys-17, Lys-31 and Lys-63 is mediated by RNF31/HOIP; linear ubiquitination is recognized with much higher affinity than 'Lys-63'-linked ubiquitin by IKBKG/NEMO. CARD11 is required for linear ubiquitination by HOIP by promoting the targeting of BCL10 to RNF31/HOIP. In terms of processing, proteolytically cleaved by MALT1; required for T-cell activation. Highly expressed in heart, brain, spleen, lung, liver, skeletal muscle, kidney and testis. Detected in developing brain, olfactory epithelium, tongue, whisker follicles, salivary gland, heart, lung, liver and intestinal epithelia of stage 15 embryos.

Its subcellular location is the cytoplasm. It is found in the membrane raft. Plays a key role in both adaptive and innate immune signaling by bridging CARD domain-containing proteins to immune activation. Acts by channeling adaptive and innate immune signaling downstream of CARD domain-containing proteins CARD9, CARD11 and CARD14 to activate NF-kappa-B and MAP kinase p38 (MAPK11, MAPK12, MAPK13 and/or MAPK14) pathways which stimulate expression of genes encoding pro-inflammatory cytokines and chemokines. Recruited by activated CARD domain-containing proteins: homooligomerized CARD domain-containing proteins form a nucleating helical template that recruits BCL10 via CARD-CARD interaction, thereby promoting polymerization of BCL10, subsequent recruitment of MALT1 and formation of a CBM complex. This leads to activation of NF-kappa-B and MAP kinase p38 (MAPK11, MAPK12, MAPK13 and/or MAPK14) pathways which stimulate expression of genes encoding pro-inflammatory cytokines and chemokines. Activated by CARD9 downstream of C-type lectin receptors; CARD9-mediated signals are essential for antifungal immunity. Activated by CARD11 downstream of T-cell receptor (TCR) and B-cell receptor (BCR). Promotes apoptosis, pro-caspase-9 maturation and activation of NF-kappa-B via NIK and IKK. In Mus musculus (Mouse), this protein is B-cell lymphoma/leukemia 10 (Bcl10).